The following is a 904-amino-acid chain: Alanine--tRNA ligase (904 aa).

Positions 584, 588, 687, and 691 each coordinate Zn(2+).

This sequence belongs to the class-II aminoacyl-tRNA synthetase family. The cofactor is Zn(2+).

The protein resides in the cytoplasm. It catalyses the reaction tRNA(Ala) + L-alanine + ATP = L-alanyl-tRNA(Ala) + AMP + diphosphate. Its function is as follows. Catalyzes the attachment of alanine to tRNA(Ala) in a two-step reaction: alanine is first activated by ATP to form Ala-AMP and then transferred to the acceptor end of tRNA(Ala). Also edits incorrectly charged Ser-tRNA(Ala) and Gly-tRNA(Ala) via its editing domain. This is Alanine--tRNA ligase from Mycobacterium bovis (strain ATCC BAA-935 / AF2122/97).